The chain runs to 342 residues: Tetraacyldisaccharide 4'-kinase (342 aa).

Position 68–75 (68–75 (TVGGTGKT)) interacts with ATP.

It belongs to the LpxK family.

It carries out the reaction a lipid A disaccharide + ATP = a lipid IVA + ADP + H(+). The protein operates within glycolipid biosynthesis; lipid IV(A) biosynthesis; lipid IV(A) from (3R)-3-hydroxytetradecanoyl-[acyl-carrier-protein] and UDP-N-acetyl-alpha-D-glucosamine: step 6/6. Transfers the gamma-phosphate of ATP to the 4'-position of a tetraacyldisaccharide 1-phosphate intermediate (termed DS-1-P) to form tetraacyldisaccharide 1,4'-bis-phosphate (lipid IVA). In Burkholderia pseudomallei (strain K96243), this protein is Tetraacyldisaccharide 4'-kinase.